Here is a 76-residue protein sequence, read N- to C-terminus: Probable 26S proteasome complex subunit dss-1 (76 aa).

Disordered stretches follow at residues 1–28 (MSSTTVTKKDQKTVVEKKETEEEEFEEF) and 52–76 (DDETHESEFSKQLKEELRKGGHPIA). Composition is skewed to basic and acidic residues over residues 7 to 20 (TKKDQKTVVEKKET) and 57 to 70 (ESEFSKQLKEELRK).

It belongs to the DSS1/SEM1 family. In terms of assembly, part of the 26S proteasome.

The protein localises to the nucleus. Its subcellular location is the cytoplasm. Subunit of the 26S proteasome which plays a role in ubiquitin-dependent proteolysis. Has an essential role in oogenesis and larval growth. Required for intestinal function and default lifespan. In Caenorhabditis briggsae, this protein is Probable 26S proteasome complex subunit dss-1.